We begin with the raw amino-acid sequence, 79 residues long: Scutelatoxin (79 aa).

Positions 1–21 are cleaved as a signal peptide; that stretch reads MKTLLLTLVVMTIMCLDLGYT. 4 cysteine pairs are disulfide-bonded: Cys-24–Cys-41, Cys-34–Cys-59, Cys-63–Cys-71, and Cys-72–Cys-77.

Belongs to the three-finger toxin family. Short-chain subfamily. Expressed by the venom gland.

Its subcellular location is the secreted. The protein is Scutelatoxin of Oxyuranus scutellatus scutellatus (Australian taipan).